A 445-amino-acid chain; its full sequence is MALVDKHKVKRQRLDRICEGIRPQIMNGPLHPRPLVALLDGRDCTVEMPILKDLATVAFCDAQSTQEIHEKVLNEAVGAMMYHTITLTREDLEKFKALRVIVRIGSGYDNVDIKAAGELGIAVCNIPSAAVEETADSTICHILNLYRRNTWLYQALREGTRVQSVEQIREVASGAARIRGETLGLIGFGRTGQAVAVRAKAFGFSVIFYDPYLQDGIERSLGVQRVYTLQDLLYQSDCVSLHCNLNEHNHHLINDFTIKQMRQGAFLVNAARGGLVDEKALAQALKEGRIRGAALDVHESEPFSFAQGPLKDAPNLICTPHTAWYSEQASLEMREAAATEIRRAITGRIPESLRNCVNKEFFVTSAPWSVIDQQAIHPELNGATYRYPPGIVGVAPGGLPAAMEGIIPGGIPVTHNLPTVAHPSQAPSPNQPTKHGDNREHPNEQ.

Asymmetric dimethylarginine is present on arginine 22. NAD(+)-binding positions include serine 106, 186–191 (IGFGRT), aspartate 210, 243–249 (CNLNEHN), 270–272 (AAR), and aspartate 296. Arginine 272 is a catalytic residue. Residue glutamate 301 is part of the active site. Histidine 321 acts as the Proton donor in catalysis. Residue 321-324 (HTAW) coordinates NAD(+). Residues 414 to 445 (THNLPTVAHPSQAPSPNQPTKHGDNREHPNEQ) are disordered. Residue serine 428 is modified to Phosphoserine. A compositionally biased stretch (basic and acidic residues) spans 434–445 (KHGDNREHPNEQ).

It belongs to the D-isomer specific 2-hydroxyacid dehydrogenase family. As to quaternary structure, can form homodimers or heterodimers of CTBP1 and CTBP2. Interacts with HIPK2 and ZNF217. Interacts with PRDM16; represses white adipose tissue (WAT)-specific genes expression. Interacts with PNN, NRIP1 and WIZ. Interacts with MCRIP1. In terms of assembly, (Microbial infection) Interacts with human adenovirus 5 E1A protein; this interaction seems to potentiate viral replication. As to expression, ubiquitous. Highest levels in heart, skeletal muscle, and pancreas.

The protein localises to the nucleus. It is found in the synapse. Corepressor targeting diverse transcription regulators. Functions in brown adipose tissue (BAT) differentiation. Its function is as follows. Isoform 2 probably acts as a scaffold for specialized synapses. In Homo sapiens (Human), this protein is C-terminal-binding protein 2 (CTBP2).